The following is a 150-amino-acid chain: Transcriptional regulator MraZ (150 aa).

SpoVT-AbrB domains are found at residues F8 to H55 and A84 to N127.

It belongs to the MraZ family. In terms of assembly, forms oligomers.

Its subcellular location is the cytoplasm. It is found in the nucleoid. The chain is Transcriptional regulator MraZ from Rickettsia bellii (strain OSU 85-389).